Consider the following 2004-residue polypeptide: Histone acetyltransferase KAT6A (2004 aa).

Residues 1–77 (MVKLANPLYT…LNSYKDPDNP (77 aa)) enclose the SAMD1-like winged helix (WH) domain. The interval 1 to 144 (MVKLANPLYT…FGGSAASGFH (144 aa)) is required for activation of RUNX1-1. The interval 52-166 (ELSVKDGTIL…HGRLLKDGPL (115 aa)) is required for nuclear localization. An H15 domain is found at 95 to 171 (QNVDWNKLIK…KDGPLYRLNT (77 aa)). An interaction with PML region spans residues 144 to 664 (HQQLRLAIKR…RKGYGRFLID (521 aa)). Lys-172 is subject to N6-acetyllysine. 2 consecutive PHD-type zinc fingers follow at residues 206–265 (IPIC…CKTC) and 259–313 (CIEC…CRPR). The tract at residues 312–664 (PRKKGRKLLQ…RKGYGRFLID (353 aa)) is interaction with RUNX1-1. Residues 334–375 (PIGRPKNRLKKQNTVSKGPFSKVRTGPGRGRKRKITLSSQSA) are disordered. Residues Lys-350 and Lys-355 each carry the N6-acetyllysine modification. Residue Thr-369 is modified to Phosphothreonine; by PKB/AKT1. Ser-420 is subject to Phosphoserine. The disordered stretch occupies residues 441 to 464 (KRGNRKSSTSDWPTDNQDGWDGKQ). Residues 446–457 (KSSTSDWPTDNQ) show a composition bias toward polar residues. A Phosphoserine modification is found at Ser-473. Residues 488–778 (IQEQALQKVG…VDPECLRWTP (291 aa)) form a catalytic region. The region spanning 504 to 778 (PQVRCPSVIE…VDPECLRWTP (275 aa)) is the MYST-type HAT domain. The mediates interaction with BRPF1, required for histone H3 acetyltransferase activity stretch occupies residues 507 to 810 (RCPSVIEFGK…EPQCQERELE (304 aa)). The segment at 537–562 (LYLCEFCLKYMKSRTILQQHMKKCGW) adopts a C2HC MYST-type zinc-finger fold. The residue at position 604 (Lys-604) is an N6-acetyllysine; by autocatalysis. Acetyl-CoA-binding positions include 645 to 649 (SCIMI) and 654 to 660 (QRKGYGR). The active-site Proton donor/acceptor is the Glu-680. An acetyl-CoA-binding site is contributed by Ser-684. Disordered stretches follow at residues 785–1445 (VVSE…AYQD), 1461–1621 (QADE…MMQQ), and 1637–1721 (SCVV…MEIP). A phosphoserine mark is found at Ser-787 and Ser-812. Residues 787 to 803 (SEEEEEEAEEGENEEPQ) are compositionally biased toward acidic residues. N6-acetyllysine is present on Lys-815. Residues 817–836 (VSHENKEQDSYSVESEKKPE) show a composition bias toward basic and acidic residues. Residue Lys-834 forms a Glycyl lysine isopeptide (Lys-Gly) (interchain with G-Cter in SUMO2) linkage. Residues 864–873 (RRGRWGRKNR) show a composition bias toward basic residues. Positions 874–888 (KTQERFGDKDSKLLL) are enriched in basic and acidic residues. Position 899 is a phosphotyrosine (Tyr-899). Composition is skewed to basic and acidic residues over residues 931 to 942 (GKPDLPKRRLSE) and 953 to 980 (KSPEALKCRLTEGSERLPRRYSEGDRAV). Phosphoserine is present on residues Ser-941, Ser-954, and Ser-974. At Lys-1007 the chain carries N6-acetyllysine. Residues 1009-1030 (TLKRKKPFLHRRRRVRKRKHHN) are compositionally biased toward basic residues. Over residues 1031–1042 (SSVVTETISETT) the composition is skewed to low complexity. Composition is skewed to acidic residues over residues 1043 to 1053 (EVLDEPFEDSD) and 1065 to 1078 (FEIDEEEEEEDENE). Phosphoserine occurs at positions 1089, 1090, and 1113. Positions 1107 to 1118 (EEEDEESDDADD) are enriched in acidic residues. Residues 1146–1172 (LKKKKGWPKGKSRKPIHWKKRPGRKPG) are compositionally biased toward basic residues. The span at 1203-1223 (KIQESEETVEPKEDMPLPEER) shows a compositional bias: basic and acidic residues. Acidic residues predominate over residues 1224 to 1245 (KEEEEMQAEAEEAEEGEEEDAA). Low complexity predominate over residues 1246–1262 (SSEVPAASPADSSNSPE). A compositionally biased stretch (basic and acidic residues) spans 1275–1287 (EKPRVSEEQRQSE). The span at 1288–1305 (EEQQELEEPEPEEEEDAA) shows a compositional bias: acidic residues. 3 stretches are compositionally biased toward basic and acidic residues: residues 1323 to 1345 (HLESTKKKELEEQPTREDVKEEP), 1358 to 1367 (KSREKIKDKE), and 1398 to 1420 (EDSHTKEELIELKEEEEIPHSEL). Residue Lys-1342 forms a Glycyl lysine isopeptide (Lys-Gly) (interchain with G-Cter in SUMO2) linkage. Residues 1481 to 1503 (SPISSVQSHPSQSVRSVSSPNVP) are compositionally biased toward low complexity. The segment covering 1508 to 1529 (GYTQISPEQGSLSAPSMQNMET) has biased composition (polar residues). Residues 1517-1642 (GSLSAPSMQN…KSPQSCVVER (126 aa)) are interaction with RUNX1-2. Positions 1517–1741 (GSLSAPSMQN…YERIPGDFGA (225 aa)) are interaction with PML. Positions 1534–1548 (DVPSVSDHSQQVVDS) are enriched in low complexity. Residues 1556-1573 (IESTTENYENPSSYDSTM) are compositionally biased toward polar residues. Low complexity predominate over residues 1574 to 1621 (GGSICGNSSSQSSCSYGGLSSSSSLTQSSCVVTQQMASMGSSCSMMQQ). A compositionally biased stretch (pro residues) spans 1650 to 1699 (QPPPPPPQQPQPPPPQPQPAPQPPPPQQQPQQQPQPQPQQPPPPPPPQQQ). Positions 1702–1712 (LSQCSMNNSFT) are enriched in polar residues. A required for activation of RUNX1-2 region spans residues 1913–1948 (SMNMNTLNAMNSYRMTQPMMNSSYHSNPAYMNQTAQ).

This sequence belongs to the MYST (SAS/MOZ) family. Component of the MOZ/MORF complex composed at least of ING5, KAT6A, KAT6B, MEAF6 and one of BRPF1, BRD1/BRPF2 and BRPF3. Interacts with RUNX1; phosphorylation of RUNX1 enhances the interaction. Interacts with RUNX2. Interacts with p53/TP53. Interacts with PML (isoform PML-4) and this interaction positively regulates its acetylation activity towards p53/TP53. Autoacetylation at Lys-604 is required for proper function. Autoacetylated. Post-translationally, phosphorylation at Thr-369 by PKB/AKT1 inhibits its interaction with PML and negatively regulates its acetylation activity towards p53/TP53.

Its subcellular location is the nucleus. It is found in the nucleolus. It localises to the nucleoplasm. The protein localises to the PML body. The catalysed reaction is L-lysyl-[protein] + acetyl-CoA = N(6)-acetyl-L-lysyl-[protein] + CoA + H(+). Its function is as follows. Histone acetyltransferase that acetylates lysine residues in histone H3 and histone H4 (in vitro). Component of the MOZ/MORF complex which has a histone H3 acetyltransferase activity. May act as a transcriptional coactivator for RUNX1 and RUNX2. Acetylates p53/TP53 at 'Lys-120' and 'Lys-382' and controls its transcriptional activity via association with PML. The chain is Histone acetyltransferase KAT6A (KAT6A) from Homo sapiens (Human).